Here is a 208-residue protein sequence, read N- to C-terminus: Crossover junction endodeoxyribonuclease RuvC (208 aa).

Catalysis depends on residues D9, E70, and D143. Mg(2+)-binding residues include D9, E70, and D143.

Belongs to the RuvC family. As to quaternary structure, homodimer which binds Holliday junction (HJ) DNA. The HJ becomes 2-fold symmetrical on binding to RuvC with unstacked arms; it has a different conformation from HJ DNA in complex with RuvA. In the full resolvosome a probable DNA-RuvA(4)-RuvB(12)-RuvC(2) complex forms which resolves the HJ. Requires Mg(2+) as cofactor.

The protein localises to the cytoplasm. It carries out the reaction Endonucleolytic cleavage at a junction such as a reciprocal single-stranded crossover between two homologous DNA duplexes (Holliday junction).. Its function is as follows. The RuvA-RuvB-RuvC complex processes Holliday junction (HJ) DNA during genetic recombination and DNA repair. Endonuclease that resolves HJ intermediates. Cleaves cruciform DNA by making single-stranded nicks across the HJ at symmetrical positions within the homologous arms, yielding a 5'-phosphate and a 3'-hydroxyl group; requires a central core of homology in the junction. The consensus cleavage sequence is 5'-(A/T)TT(C/G)-3'. Cleavage occurs on the 3'-side of the TT dinucleotide at the point of strand exchange. HJ branch migration catalyzed by RuvA-RuvB allows RuvC to scan DNA until it finds its consensus sequence, where it cleaves and resolves the cruciform DNA. This is Crossover junction endodeoxyribonuclease RuvC from Leifsonia xyli subsp. xyli (strain CTCB07).